Consider the following 404-residue polypeptide: Cysteine desulfurase IscS (404 aa).

Residues Ala73–Thr74, Asn153, Gln181, and Ser201–His203 each bind pyridoxal 5'-phosphate. Lys204 bears the N6-(pyridoxal phosphate)lysine mark. Thr241 lines the pyridoxal 5'-phosphate pocket. The active-site Cysteine persulfide intermediate is the Cys327. Position 327 (Cys327) interacts with [2Fe-2S] cluster.

It belongs to the class-V pyridoxal-phosphate-dependent aminotransferase family. NifS/IscS subfamily. In terms of assembly, homodimer. Forms a heterotetramer with IscU, interacts with other sulfur acceptors. Pyridoxal 5'-phosphate serves as cofactor.

It localises to the cytoplasm. The enzyme catalyses (sulfur carrier)-H + L-cysteine = (sulfur carrier)-SH + L-alanine. It participates in cofactor biosynthesis; iron-sulfur cluster biosynthesis. Its function is as follows. Master enzyme that delivers sulfur to a number of partners involved in Fe-S cluster assembly, tRNA modification or cofactor biosynthesis. Catalyzes the removal of elemental sulfur atoms from cysteine to produce alanine. Functions as a sulfur delivery protein for Fe-S cluster synthesis onto IscU, an Fe-S scaffold assembly protein, as well as other S acceptor proteins. The polypeptide is Cysteine desulfurase IscS (Anaeromyxobacter sp. (strain K)).